The following is a 209-amino-acid chain: Iron-sulfur cluster assembly 2 homolog, mitochondrial (209 aa).

Residues Met-1 to Ile-27 constitute a mitochondrion transit peptide. Residues Cys-134, Cys-199, and Cys-201 each coordinate Fe cation.

Belongs to the HesB/IscA family. Fe cation is required as a cofactor.

It localises to the mitochondrion. In terms of biological role, involved in the maturation of mitochondrial 4Fe-4S proteins functioning late in the iron-sulfur cluster assembly pathway. May be involved in the binding of an intermediate of Fe/S cluster assembly. The protein is Iron-sulfur cluster assembly 2 homolog, mitochondrial (isca2) of Dictyostelium discoideum (Social amoeba).